Reading from the N-terminus, the 423-residue chain is Imidazolonepropionase (423 aa).

Fe(3+) contacts are provided by H87 and H89. Zn(2+) contacts are provided by H87 and H89. 4-imidazolone-5-propanoate contacts are provided by R96, Y159, and H192. Y159 lines the N-formimidoyl-L-glutamate pocket. H257 contacts Fe(3+). Position 257 (H257) interacts with Zn(2+). Residue E260 coordinates 4-imidazolone-5-propanoate. D331 contacts Fe(3+). D331 is a Zn(2+) binding site. N-formimidoyl-L-glutamate contacts are provided by N333 and G335. S336 contributes to the 4-imidazolone-5-propanoate binding site.

The protein belongs to the metallo-dependent hydrolases superfamily. HutI family. Requires Zn(2+) as cofactor. Fe(3+) serves as cofactor.

It is found in the cytoplasm. The catalysed reaction is 4-imidazolone-5-propanoate + H2O = N-formimidoyl-L-glutamate. It participates in amino-acid degradation; L-histidine degradation into L-glutamate; N-formimidoyl-L-glutamate from L-histidine: step 3/3. Its function is as follows. Catalyzes the hydrolytic cleavage of the carbon-nitrogen bond in imidazolone-5-propanoate to yield N-formimidoyl-L-glutamate. It is the third step in the universal histidine degradation pathway. This is Imidazolonepropionase from Porphyromonas gingivalis (strain ATCC BAA-308 / W83).